Consider the following 276-residue polypeptide: NAD-capped RNA hydrolase NudC (276 aa).

Arginine 82 provides a ligand contact to substrate. Zn(2+) contacts are provided by cysteine 112 and cysteine 115. Residue glutamate 125 coordinates substrate. The Zn(2+) site is built by cysteine 130 and cysteine 133. Substrate is bound at residue tyrosine 138. The 124-residue stretch at 139-262 (PRISPSMIVL…SIARYLIDLY (124 aa)) folds into the Nudix hydrolase domain. The a divalent metal cation site is built by alanine 172, glutamate 188, and glutamate 192. The Nudix box motif lies at 173–194 (GFAEPGESAEDCLVREVREEVA). Residue 206-213 (QCWPFPHS) participates in substrate binding. Glutamate 233 is a binding site for a divalent metal cation. Alanine 255 contributes to the substrate binding site.

It belongs to the Nudix hydrolase family. NudC subfamily. Homodimer. Mg(2+) serves as cofactor. Mn(2+) is required as a cofactor. Requires Zn(2+) as cofactor.

The enzyme catalyses a 5'-end NAD(+)-phospho-ribonucleoside in mRNA + H2O = a 5'-end phospho-adenosine-phospho-ribonucleoside in mRNA + beta-nicotinamide D-ribonucleotide + 2 H(+). The catalysed reaction is NAD(+) + H2O = beta-nicotinamide D-ribonucleotide + AMP + 2 H(+). It carries out the reaction NADH + H2O = reduced beta-nicotinamide D-ribonucleotide + AMP + 2 H(+). Its function is as follows. mRNA decapping enzyme that specifically removes the nicotinamide adenine dinucleotide (NAD) cap from a subset of mRNAs by hydrolyzing the diphosphate linkage to produce nicotinamide mononucleotide (NMN) and 5' monophosphate mRNA. The NAD-cap is present at the 5'-end of some mRNAs and stabilizes RNA against 5'-processing. Has preference for mRNAs with a 5'-end purine. Catalyzes the hydrolysis of a broad range of dinucleotide pyrophosphates. The chain is NAD-capped RNA hydrolase NudC from Pseudomonas putida (strain ATCC 47054 / DSM 6125 / CFBP 8728 / NCIMB 11950 / KT2440).